A 337-amino-acid polypeptide reads, in one-letter code: Fructose-1,6-bisphosphatase class 1 (337 aa).

E94, D116, L118, and D119 together coordinate Mg(2+). Substrate contacts are provided by residues 119–122, N210, and K276; that span reads DGSS. E282 serves as a coordination point for Mg(2+).

This sequence belongs to the FBPase class 1 family. In terms of assembly, homotetramer. Mg(2+) is required as a cofactor.

It localises to the cytoplasm. It carries out the reaction beta-D-fructose 1,6-bisphosphate + H2O = beta-D-fructose 6-phosphate + phosphate. It functions in the pathway carbohydrate biosynthesis; gluconeogenesis. This Burkholderia lata (strain ATCC 17760 / DSM 23089 / LMG 22485 / NCIMB 9086 / R18194 / 383) protein is Fructose-1,6-bisphosphatase class 1.